The primary structure comprises 129 residues: Holo-[acyl-carrier-protein] synthase (129 aa).

Residues D8 and E58 each coordinate Mg(2+).

This sequence belongs to the P-Pant transferase superfamily. AcpS family. Requires Mg(2+) as cofactor.

The protein localises to the cytoplasm. It carries out the reaction apo-[ACP] + CoA = holo-[ACP] + adenosine 3',5'-bisphosphate + H(+). Functionally, transfers the 4'-phosphopantetheine moiety from coenzyme A to a Ser of acyl-carrier-protein. This is Holo-[acyl-carrier-protein] synthase from Acidithiobacillus ferrooxidans (strain ATCC 53993 / BNL-5-31) (Leptospirillum ferrooxidans (ATCC 53993)).